The primary structure comprises 774 residues: Ras and Rab interactor 1 (774 aa).

M1 carries the post-translational modification N-acetylmethionine. Residues 1–52 are disordered; that stretch reads MEDPGETEAHPLGATSLNFVPGYQQEEKPSPDPLYDTPDARGVQAGGSQQPA. S16 bears the Phosphoserine mark. Residue Y35 is modified to Phosphotyrosine; by ABL1 and ABL2. Residues 68-162 form the SH2 domain; it reads WLQLRANAAA…ILLLPLPLPR (95 aa). 2 disordered regions span residues 188–211 and 249–342; these read LNTKNQQRPSEAPQIPRLKARSPQ and STET…RPRH. S209, S257, S330, and S334 each carry phosphoserine. Residues 256–268 show a composition bias toward pro residues; the sequence is LSPPAVPPPPVPV. Positions 327–337 are enriched in low complexity; it reads SSGSPTTSPRL. S351 carries the phosphoserine; by PKD/PRKD1 modification. Residues 456–598 form the VPS9 domain; that stretch reads LSTDGSLGRL…LSGLSQAHAL (143 aa). Position 609 is a phosphoserine (S609). The region spanning 624-706 is the Ras-associating domain; that stretch reads FQHLLRVAYQ…GYLIYRRAER (83 aa). The residue at position 692 (R692) is an Omega-N-methylarginine. Positions 704–766 are enriched in basic and acidic residues; it reads AERPETQRAA…GHMQLEEQKA (63 aa). The disordered stretch occupies residues 704-774; it reads AERPETQRAA…KAEGCPALEE (71 aa).

The protein belongs to the RIN (Ras interaction/interference) family. Interacts with the GTP-bound form of Ras proteins (NRAS, HRAS and KRAS). This interaction prevents the association between RAF1 and Ras. Interacts with 14-3-3 proteins YWHAB, YWHAE and YWHAZ when phosphorylated on Ser-351. Interacts with the SH3 domain of ABL1 and ABL2. Interacts with RAB5A. The interaction with Ras is probably regulated and antagonized by the interaction with 14-3-3 proteins. The interaction with 14-3-3 proteins is regulated by phosphorylation on Ser-351. Phosphorylated on tyrosine residues by ABL1 and ABL2. Phosphorylation at Ser-351 by PRKD1 induces interaction with 14-3-3 proteins.

It localises to the cytoplasm. Its subcellular location is the membrane. The protein resides in the cytoskeleton. Functionally, ras effector protein, which may serve as an inhibitory modulator of neuronal plasticity in aversive memory formation. Can affect Ras signaling at different levels. First, by competing with RAF1 protein for binding to activated Ras. Second, by enhancing signaling from ABL1 and ABL2, which regulate cytoskeletal remodeling. Third, by activating RAB5A, possibly by functioning as a guanine nucleotide exchange factor (GEF) for RAB5A, by exchanging bound GDP for free GTP, and facilitating Ras-activated receptor endocytosis. The chain is Ras and Rab interactor 1 (Rin1) from Rattus norvegicus (Rat).